We begin with the raw amino-acid sequence, 1158 residues long: cGMP-specific 3',5'-cyclic phosphodiesterase (1158 aa).

2 disordered regions span residues Met-1–Asp-137 and Ser-195–Glu-216. Positions Ala-30–Asn-71 are enriched in low complexity. Residues Gly-108–Gln-135 show a composition bias toward polar residues. Residues Ser-202–Pro-215 are compositionally biased toward low complexity. 2 consecutive GAF domains span residues Asp-242–Ile-394 and Asn-426–Ile-640. In terms of domain architecture, PDEase spans Ser-670–Val-993. His-746 acts as the Proton donor in catalysis. His-750, His-786, Asp-787, and Asp-897 together coordinate a divalent metal cation. Disordered regions lie at residues Gln-1034 to Leu-1065 and Val-1097 to Leu-1158. The span at Gly-1041–Arg-1052 shows a compositional bias: basic and acidic residues. The span at Ala-1114–Ala-1130 shows a compositional bias: low complexity. A compositionally biased stretch (basic residues) spans Ser-1148–Leu-1158. Cysteine methyl ester is present on Cys-1155. Cys-1155 is lipidated: S-farnesyl cysteine. The propeptide at Ala-1156–Leu-1158 is removed in mature form.

It belongs to the cyclic nucleotide phosphodiesterase family. In terms of assembly, interacts with PrBP. Requires a divalent metal cation as cofactor.

It is found in the cell membrane. The catalysed reaction is 3',5'-cyclic GMP + H2O = GMP + H(+). Its function is as follows. Has a role regulating cGMP transport in Malpighian tubule principal cells. This chain is cGMP-specific 3',5'-cyclic phosphodiesterase, found in Drosophila ananassae (Fruit fly).